The chain runs to 419 residues: Serine--tRNA ligase (419 aa).

226–228 (TSE) provides a ligand contact to L-serine. ATP is bound by residues 257–259 (RRE) and Val-273. L-serine is bound at residue Glu-280. Residue 344–347 (ELTS) participates in ATP binding. Thr-379 serves as a coordination point for L-serine.

The protein belongs to the class-II aminoacyl-tRNA synthetase family. Type-1 seryl-tRNA synthetase subfamily. Homodimer. The tRNA molecule binds across the dimer.

The protein resides in the cytoplasm. The catalysed reaction is tRNA(Ser) + L-serine + ATP = L-seryl-tRNA(Ser) + AMP + diphosphate + H(+). It catalyses the reaction tRNA(Sec) + L-serine + ATP = L-seryl-tRNA(Sec) + AMP + diphosphate + H(+). It participates in aminoacyl-tRNA biosynthesis; selenocysteinyl-tRNA(Sec) biosynthesis; L-seryl-tRNA(Sec) from L-serine and tRNA(Sec): step 1/1. In terms of biological role, catalyzes the attachment of serine to tRNA(Ser). Is also able to aminoacylate tRNA(Sec) with serine, to form the misacylated tRNA L-seryl-tRNA(Sec), which will be further converted into selenocysteinyl-tRNA(Sec). In Corynebacterium efficiens (strain DSM 44549 / YS-314 / AJ 12310 / JCM 11189 / NBRC 100395), this protein is Serine--tRNA ligase.